The following is a 491-amino-acid chain: UDP-N-acetylmuramoyl-L-alanyl-D-glutamate--2,6-diaminopimelate ligase (491 aa).

A UDP-N-acetyl-alpha-D-muramoyl-L-alanyl-D-glutamate-binding site is contributed by S30. 108–114 contacts ATP; sequence GTNGKTT. Residues N149, 150-151, S177, Q183, and R185 contribute to the UDP-N-acetyl-alpha-D-muramoyl-L-alanyl-D-glutamate site; that span reads TT. K217 carries the N6-carboxylysine modification. Meso-2,6-diaminopimelate contacts are provided by residues R383, 407-410, G458, and E462; that span reads DNPR. The short motif at 407–410 is the Meso-diaminopimelate recognition motif element; the sequence is DNPR.

The protein belongs to the MurCDEF family. MurE subfamily. The cofactor is Mg(2+). Post-translationally, carboxylation is probably crucial for Mg(2+) binding and, consequently, for the gamma-phosphate positioning of ATP.

The protein resides in the cytoplasm. The enzyme catalyses UDP-N-acetyl-alpha-D-muramoyl-L-alanyl-D-glutamate + meso-2,6-diaminopimelate + ATP = UDP-N-acetyl-alpha-D-muramoyl-L-alanyl-gamma-D-glutamyl-meso-2,6-diaminopimelate + ADP + phosphate + H(+). It functions in the pathway cell wall biogenesis; peptidoglycan biosynthesis. Catalyzes the addition of meso-diaminopimelic acid to the nucleotide precursor UDP-N-acetylmuramoyl-L-alanyl-D-glutamate (UMAG) in the biosynthesis of bacterial cell-wall peptidoglycan. The polypeptide is UDP-N-acetylmuramoyl-L-alanyl-D-glutamate--2,6-diaminopimelate ligase (Listeria innocua serovar 6a (strain ATCC BAA-680 / CLIP 11262)).